The sequence spans 453 residues: UDP-N-acetylmuramoylalanine--D-glutamate ligase (453 aa).

115–121 (GTNGKTT) lines the ATP pocket.

Belongs to the MurCDEF family.

It is found in the cytoplasm. It catalyses the reaction UDP-N-acetyl-alpha-D-muramoyl-L-alanine + D-glutamate + ATP = UDP-N-acetyl-alpha-D-muramoyl-L-alanyl-D-glutamate + ADP + phosphate + H(+). It functions in the pathway cell wall biogenesis; peptidoglycan biosynthesis. Cell wall formation. Catalyzes the addition of glutamate to the nucleotide precursor UDP-N-acetylmuramoyl-L-alanine (UMA). The protein is UDP-N-acetylmuramoylalanine--D-glutamate ligase of Geotalea daltonii (strain DSM 22248 / JCM 15807 / FRC-32) (Geobacter daltonii).